Consider the following 137-residue polypeptide: MIWKRHMTLEALNATSVGTLVEHLGIEYTRLGDDLLEATMPVDTRTHQPFGLLHGGASAALAETLGSMAGYLTTRDGQCVVGTEISASHHRAVSQGQVRGVCQPLHLGRQSQCWEIVIYDEQGRRCCTSRLSTAVMG.

The active-site Nucleophile or proton acceptor is Glu63.

This sequence belongs to the thioesterase PaaI family. As to quaternary structure, homotetramer. Dimer of dimers. Interacts specifically with the aryl carrier protein (ArCP) domain of EntB.

The protein localises to the cytoplasm. The protein operates within siderophore biosynthesis; enterobactin biosynthesis. In terms of biological role, required for optimal enterobactin synthesis. Acts as a proofreading enzyme that prevents EntB misacylation by hydrolyzing the thioester bound existing between EntB and wrongly charged molecules. The protein is Proofreading thioesterase EntH of Cronobacter turicensis (strain DSM 18703 / CCUG 55852 / LMG 23827 / z3032).